The primary structure comprises 407 residues: Phosphopentomutase (407 aa).

Residues D10, D306, H311, D347, H348, and H359 each coordinate Mn(2+).

The protein belongs to the phosphopentomutase family. Mn(2+) serves as cofactor.

Its subcellular location is the cytoplasm. The catalysed reaction is 2-deoxy-alpha-D-ribose 1-phosphate = 2-deoxy-D-ribose 5-phosphate. It catalyses the reaction alpha-D-ribose 1-phosphate = D-ribose 5-phosphate. It functions in the pathway carbohydrate degradation; 2-deoxy-D-ribose 1-phosphate degradation; D-glyceraldehyde 3-phosphate and acetaldehyde from 2-deoxy-alpha-D-ribose 1-phosphate: step 1/2. Isomerase that catalyzes the conversion of deoxy-ribose 1-phosphate (dRib-1-P) and ribose 1-phosphate (Rib-1-P) to deoxy-ribose 5-phosphate (dRib-5-P) and ribose 5-phosphate (Rib-5-P), respectively. The polypeptide is Phosphopentomutase (Buchnera aphidicola subsp. Acyrthosiphon pisum (strain 5A)).